The primary structure comprises 353 residues: Nicotinate-nucleotide--dimethylbenzimidazole phosphoribosyltransferase (353 aa).

The Proton acceptor role is filled by Glu319.

It belongs to the CobT family.

It catalyses the reaction 5,6-dimethylbenzimidazole + nicotinate beta-D-ribonucleotide = alpha-ribazole 5'-phosphate + nicotinate + H(+). It functions in the pathway nucleoside biosynthesis; alpha-ribazole biosynthesis; alpha-ribazole from 5,6-dimethylbenzimidazole: step 1/2. In terms of biological role, catalyzes the synthesis of alpha-ribazole-5'-phosphate from nicotinate mononucleotide (NAMN) and 5,6-dimethylbenzimidazole (DMB). The sequence is that of Nicotinate-nucleotide--dimethylbenzimidazole phosphoribosyltransferase from Chlorobaculum parvum (strain DSM 263 / NCIMB 8327) (Chlorobium vibrioforme subsp. thiosulfatophilum).